We begin with the raw amino-acid sequence, 117 residues long: Elafin (117 aa).

An N-terminal signal peptide occupies residues 1 to 22 (MRASSFLIVVVFLIAGTLVLEA). The propeptide occupies 23–60 (AVTGVPVKGQDTVKGRVPFNGQDPVKGQVSVKGQDKVK). SVP-1 clotting repeat units lie at residues 29–54 (VKGQDTVKGRVPFNGQDPVKGQVSVK) and 55–72 (GQDKVKAQEPVKGPVSTK). Residues 29–72 (VKGQDTVKGRVPFNGQDPVKGQVSVKGQDKVKAQEPVKGPVSTK) form a 2 X tandem repeats of SVP-1 like motif region. The WAP domain maps to 69 to 117 (VSTKPGSCPIILIRCAMLNPPNRCLKDTDCPGIKKCCEGSCGMACFVPQ). 4 disulfides stabilise this stretch: C76-C105, C83-C109, C92-C104, and C98-C113.

It is found in the secreted. Functionally, neutrophil and pancreatic elastase-specific inhibitor of skin. It may prevent elastase-mediated tissue proteolysis. Has been shown to inhibit the alpha-4-beta-2/CHRNA2-CHRNB2 nicotinic acetylcholine receptor and to produce a weak inhibition on Kv11.1/KCNH2/ERG1 and on the transient receptor potential cation channel subfamily V member 1 (TRPV1). The chain is Elafin (PI3) from Homo sapiens (Human).